The following is a 299-amino-acid chain: Dihydroorotate dehydrogenase B (NAD(+)), catalytic subunit (299 aa).

FMN is bound by residues S21 and 44 to 45 (KS). Substrate-binding positions include K44, 68–72 (NAVGL), and N125. N125 is an FMN binding site. The active-site Nucleophile is the C128. K163 is an FMN binding site. Residue 189-190 (NT) coordinates substrate. Residues G214, 240–241 (GG), and 262–263 (GS) each bind FMN.

It belongs to the dihydroorotate dehydrogenase family. Type 1 subfamily. Heterotetramer of 2 PyrK and 2 PyrD type B subunits. Requires FMN as cofactor.

It localises to the cytoplasm. It catalyses the reaction (S)-dihydroorotate + NAD(+) = orotate + NADH + H(+). It functions in the pathway pyrimidine metabolism; UMP biosynthesis via de novo pathway; orotate from (S)-dihydroorotate (NAD(+) route): step 1/1. Its function is as follows. Catalyzes the conversion of dihydroorotate to orotate with NAD(+) as electron acceptor. The sequence is that of Dihydroorotate dehydrogenase B (NAD(+)), catalytic subunit (pyrD) from Archaeoglobus fulgidus (strain ATCC 49558 / DSM 4304 / JCM 9628 / NBRC 100126 / VC-16).